The chain runs to 506 residues: Protein MGF 505-9R (506 aa).

3 ANK repeats span residues 54-83, 253-283, and 313-343; these read PTHKAVQIAASEGNEDIVKLFLLWKGSLQY, QVDTVLFQAVKYNHRKILAHFIHEIPRETVE, and FVKKLLHAVVKHKYMLIIKLLLERPKKKINL.

The protein belongs to the asfivirus MGF 505 family.

Its function is as follows. Plays a role in virus cell tropism, and may be required for efficient virus replication in macrophages. The sequence is that of Protein MGF 505-9R from Ornithodoros (relapsing fever ticks).